The chain runs to 300 residues: 4-hydroxy-tetrahydrodipicolinate synthase (300 aa).

T45 is a pyruvate binding site. The active-site Proton donor/acceptor is Y140. The active-site Schiff-base intermediate with substrate is the K169. I210 is a binding site for pyruvate.

The protein belongs to the DapA family. As to quaternary structure, homotetramer; dimer of dimers.

It localises to the cytoplasm. The enzyme catalyses L-aspartate 4-semialdehyde + pyruvate = (2S,4S)-4-hydroxy-2,3,4,5-tetrahydrodipicolinate + H2O + H(+). It participates in amino-acid biosynthesis; L-lysine biosynthesis via DAP pathway; (S)-tetrahydrodipicolinate from L-aspartate: step 3/4. Catalyzes the condensation of (S)-aspartate-beta-semialdehyde [(S)-ASA] and pyruvate to 4-hydroxy-tetrahydrodipicolinate (HTPA). This Helicobacter pylori (strain G27) protein is 4-hydroxy-tetrahydrodipicolinate synthase.